A 1388-amino-acid chain; its full sequence is DNA-directed RNA polymerase subunit beta'' (1388 aa).

Positions 224, 294, 301, and 304 each coordinate Zn(2+).

This sequence belongs to the RNA polymerase beta' chain family. RpoC2 subfamily. As to quaternary structure, in plastids the minimal PEP RNA polymerase catalytic core is composed of four subunits: alpha, beta, beta', and beta''. When a (nuclear-encoded) sigma factor is associated with the core the holoenzyme is formed, which can initiate transcription. Zn(2+) serves as cofactor.

It localises to the plastid. Its subcellular location is the chloroplast. It catalyses the reaction RNA(n) + a ribonucleoside 5'-triphosphate = RNA(n+1) + diphosphate. Its function is as follows. DNA-dependent RNA polymerase catalyzes the transcription of DNA into RNA using the four ribonucleoside triphosphates as substrates. The polypeptide is DNA-directed RNA polymerase subunit beta'' (Phalaenopsis aphrodite subsp. formosana (Moth orchid)).